Consider the following 270-residue polypeptide: MSGAKSMSYAEMFRRADGCAFVPFVVAGDPDMETSLEIIRTLVDAGADALEVGFPFSDPIADGTSVQGADLRALRAGMTTEKCFQLIERVREFTSIPIGLLVYYNLIYRMGVDEFYRRAAEAGVTGILAADLPPEEASDALRAAEKYDIDQIFIVAPTTGSERLKRISEVSSGFHYLVSVMGVTGARSRVEDATIELIKRVKAEGSLPVMVGFGVSRPEHVRMLRDAGADGVIVGSAIIDVISGNLGDRELMLQRIHEMAGTLKAAGGSG.

Catalysis depends on proton acceptor residues Glu51 and Asp62.

The protein belongs to the TrpA family. In terms of assembly, tetramer of two alpha and two beta chains.

It catalyses the reaction (1S,2R)-1-C-(indol-3-yl)glycerol 3-phosphate + L-serine = D-glyceraldehyde 3-phosphate + L-tryptophan + H2O. The protein operates within amino-acid biosynthesis; L-tryptophan biosynthesis; L-tryptophan from chorismate: step 5/5. Functionally, the alpha subunit is responsible for the aldol cleavage of indoleglycerol phosphate to indole and glyceraldehyde 3-phosphate. In Methanothermobacter thermautotrophicus (strain ATCC 29096 / DSM 1053 / JCM 10044 / NBRC 100330 / Delta H) (Methanobacterium thermoautotrophicum), this protein is Tryptophan synthase alpha chain.